We begin with the raw amino-acid sequence, 340 residues long: Ketol-acid reductoisomerase (NADP(+)) (340 aa).

The 181-residue stretch at 3 to 183 folds into the KARI N-terminal Rossmann domain; it reads VSIYYDKDCD…GGGRTGIIET (181 aa). Residues 26–29, Lys49, Ser54, and 84–87 each bind NADP(+); these read FGSQ and DEIQ. His109 is a catalytic residue. Gly135 provides a ligand contact to NADP(+). Residues 184–329 enclose the KARI C-terminal knotted domain; that stretch reads TFKAETETDL…RELRAMMPWI (146 aa). The Mg(2+) site is built by Asp192, Glu196, Glu228, and Glu232. Ser253 serves as a coordination point for substrate.

It belongs to the ketol-acid reductoisomerase family. It depends on Mg(2+) as a cofactor.

It catalyses the reaction (2R)-2,3-dihydroxy-3-methylbutanoate + NADP(+) = (2S)-2-acetolactate + NADPH + H(+). The catalysed reaction is (2R,3R)-2,3-dihydroxy-3-methylpentanoate + NADP(+) = (S)-2-ethyl-2-hydroxy-3-oxobutanoate + NADPH + H(+). It participates in amino-acid biosynthesis; L-isoleucine biosynthesis; L-isoleucine from 2-oxobutanoate: step 2/4. It functions in the pathway amino-acid biosynthesis; L-valine biosynthesis; L-valine from pyruvate: step 2/4. Involved in the biosynthesis of branched-chain amino acids (BCAA). Catalyzes an alkyl-migration followed by a ketol-acid reduction of (S)-2-acetolactate (S2AL) to yield (R)-2,3-dihydroxy-isovalerate. In the isomerase reaction, S2AL is rearranged via a Mg-dependent methyl migration to produce 3-hydroxy-3-methyl-2-ketobutyrate (HMKB). In the reductase reaction, this 2-ketoacid undergoes a metal-dependent reduction by NADPH to yield (R)-2,3-dihydroxy-isovalerate. In Campylobacter lari (strain RM2100 / D67 / ATCC BAA-1060), this protein is Ketol-acid reductoisomerase (NADP(+)).